A 188-amino-acid polypeptide reads, in one-letter code: Large ribosomal subunit protein bL35m (188 aa).

The protein belongs to the bacterial ribosomal protein bL35 family.

The protein resides in the mitochondrion. This chain is Large ribosomal subunit protein bL35m (MRPL35), found in Pongo abelii (Sumatran orangutan).